A 618-amino-acid polypeptide reads, in one-letter code: Protease 4 (618 aa).

The Cytoplasmic segment spans residues 1 to 24 (MRTLWRFIAGFFKWTWRLLNFVRE). Residues 25-45 (MVLNLFFIFLVLVGVGIWMQV) traverse the membrane as a helical segment. The Periplasmic segment spans residues 46 to 618 (SGGDSKETAS…AFCLTCANMR (573 aa)). Residue Lys209 is the Proton donor/acceptor of the active site. Residue Ser409 is the Nucleophile of the active site.

Belongs to the peptidase S49 family. In terms of assembly, homotetramer.

It localises to the cell inner membrane. Its activity is regulated as follows. Inhibited by serine hydrolase inhibitor FP-biotin and by antipain. Its function is as follows. Digests cleaved signal peptides in vitro, its in vivo function is unknown. This activity is necessary to maintain proper secretion of mature proteins across the membrane. This chain is Protease 4 (sppA), found in Escherichia coli (strain K12).